A 548-amino-acid polypeptide reads, in one-letter code: MAKELRFGDDARLQMLAGVNALADAVQVTMGPRGRNVVLEKSYGAPTVTKDGVSVAKEIEFEHRFMNMGAQMVKEVASKTSDTAGDGTTTATVLARSILVEGHKAVAAGMNPMDLKRGIDKAVLAVTKKLQAMSKPCKDSKAIAQVGTISANSDEAIGAIIAEAMEKVGKEGVITVEDGNGLENELSVVEGMQFDRGYISPYFINNQQNMSCELEHPFILLVDKKVSSIREMLSVLEGVAKSGRPLLIIAEDVEGEALATLVVNNMRGIVKVCAVKAPGFGDRRKAMLQDIAILTKGQVISEEIGKSLEGATLEDLGSAKRIVVTKENTTIIDGEGKATEINARIAQIRAQMEETTSDYDREKLQERVAKLAGGVAVIKVGAATEVEMKEKKARVEDALHATRAAVEEGIVAGGGVALIRAQKALDSLKGDNDDQNMGINILRRAIESPMRQIVTNAGYEASVVVNKVAEHKDNYGFNAATGEYGDMVEMGILDPTKVTRMALQNAASVASLMLTTECMVADLPKKEEGVGAGDMGGMGGMGGMGGMM.

Residues 29–32 (TMGP), K50, 86–90 (DGTTT), G414, 478–480 (NAA), and D494 contribute to the ATP site.

The protein belongs to the chaperonin (HSP60) family. Forms a cylinder of 14 subunits composed of two heptameric rings stacked back-to-back. Interacts with the co-chaperonin GroES.

Its subcellular location is the cytoplasm. The catalysed reaction is ATP + H2O + a folded polypeptide = ADP + phosphate + an unfolded polypeptide.. Its function is as follows. Together with its co-chaperonin GroES, plays an essential role in assisting protein folding. The GroEL-GroES system forms a nano-cage that allows encapsulation of the non-native substrate proteins and provides a physical environment optimized to promote and accelerate protein folding. This is Chaperonin GroEL from Legionella pneumophila (strain Paris).